Consider the following 221-residue polypeptide: MGRFRGGLRCIKYLLLGFNLLFWLAGSAVIAFGLWFRFGGTMKDLSSEDKSPEYFYVGLYVLVGAGALMMTVGFFGCCGAMRESQCVLGSFFTCLLVIFAAEVTTGVFAFIGKDVAIRHVQSMYEEAYSDYLKDRARGNGTLITFHSAFQCCGKESSEQVQPTCPKELPGHKNCIDKIETVISAKLQLIGIVGIGIAGLTIFGMIFSMVLCCAIRNSRDVI.

The Cytoplasmic portion of the chain corresponds to 1–13; the sequence is MGRFRGGLRCIKY. Residues 14-34 form a helical membrane-spanning segment; the sequence is LLLGFNLLFWLAGSAVIAFGL. The Extracellular segment spans residues 35–54; sequence WFRFGGTMKDLSSEDKSPEY. A helical transmembrane segment spans residues 55–75; it reads FYVGLYVLVGAGALMMTVGFF. The Cytoplasmic segment spans residues 76-90; sequence GCCGAMRESQCVLGS. The helical transmembrane segment at 91–111 threads the bilayer; the sequence is FFTCLLVIFAAEVTTGVFAFI. Topologically, residues 112 to 188 are extracellular; that stretch reads GKDVAIRHVQ…ETVISAKLQL (77 aa). N-linked (GlcNAc...) asparagine glycosylation is present at N139. A helical membrane pass occupies residues 189–209; sequence IGIVGIGIAGLTIFGMIFSMV. Over 210 to 221 the chain is Cytoplasmic; it reads LCCAIRNSRDVI.

This sequence belongs to the tetraspanin (TM4SF) family.

The protein resides in the membrane. Its function is as follows. May play a role in signalling in oligodendrocytes in the early stages of their terminal differentiation into myelin-forming glia and may also function in stabilizing the mature sheath. This is Tetraspanin-2 (Tspan2) from Mus musculus (Mouse).